Consider the following 79-residue polypeptide: Gene 68 protein (79 aa).

The interval 58–79 (ETHAARAGRPIHDALIDPKKVK) is disordered.

The sequence is that of Gene 68 protein (68) from Mycobacterium (Mycobacteriophage L5).